The chain runs to 464 residues: Asparagine--tRNA ligase (464 aa).

The protein belongs to the class-II aminoacyl-tRNA synthetase family. In terms of assembly, homodimer.

The protein resides in the cytoplasm. The catalysed reaction is tRNA(Asn) + L-asparagine + ATP = L-asparaginyl-tRNA(Asn) + AMP + diphosphate + H(+). The chain is Asparagine--tRNA ligase from Clostridium beijerinckii (strain ATCC 51743 / NCIMB 8052) (Clostridium acetobutylicum).